Here is a 476-residue protein sequence, read N- to C-terminus: Aspartyl/glutamyl-tRNA(Asn/Gln) amidotransferase subunit B (476 aa).

This sequence belongs to the GatB/GatE family. GatB subfamily. Heterotrimer of A, B and C subunits.

It catalyses the reaction L-glutamyl-tRNA(Gln) + L-glutamine + ATP + H2O = L-glutaminyl-tRNA(Gln) + L-glutamate + ADP + phosphate + H(+). It carries out the reaction L-aspartyl-tRNA(Asn) + L-glutamine + ATP + H2O = L-asparaginyl-tRNA(Asn) + L-glutamate + ADP + phosphate + 2 H(+). Allows the formation of correctly charged Asn-tRNA(Asn) or Gln-tRNA(Gln) through the transamidation of misacylated Asp-tRNA(Asn) or Glu-tRNA(Gln) in organisms which lack either or both of asparaginyl-tRNA or glutaminyl-tRNA synthetases. The reaction takes place in the presence of glutamine and ATP through an activated phospho-Asp-tRNA(Asn) or phospho-Glu-tRNA(Gln). This chain is Aspartyl/glutamyl-tRNA(Asn/Gln) amidotransferase subunit B, found in Geobacillus kaustophilus (strain HTA426).